Here is a 428-residue protein sequence, read N- to C-terminus: uncharacterized protein (428 aa).

A Glutaredoxin domain is found at 241 to 351 (KEEEEQSVGK…KLLGGCERVE (111 aa)). Residues 386 to 401 (EDDDDDDDEGDDDESV) show a composition bias toward acidic residues. Residues 386–405 (EDDDDDDDEGDDDESVKEER) are disordered.

This is an uncharacterized protein from Arabidopsis thaliana (Mouse-ear cress).